We begin with the raw amino-acid sequence, 577 residues long: Sulfite reductase [NADPH] hemoprotein beta-component (577 aa).

[4Fe-4S] cluster contacts are provided by C440, C446, C486, and C490. C490 provides a ligand contact to siroheme.

This sequence belongs to the nitrite and sulfite reductase 4Fe-4S domain family. As to quaternary structure, alpha(8)-beta(8). The alpha component is a flavoprotein, the beta component is a hemoprotein. The cofactor is siroheme. [4Fe-4S] cluster is required as a cofactor.

The enzyme catalyses hydrogen sulfide + 3 NADP(+) + 3 H2O = sulfite + 3 NADPH + 4 H(+). Its pathway is sulfur metabolism; hydrogen sulfide biosynthesis; hydrogen sulfide from sulfite (NADPH route): step 1/1. In terms of biological role, component of the sulfite reductase complex that catalyzes the 6-electron reduction of sulfite to sulfide. This is one of several activities required for the biosynthesis of L-cysteine from sulfate. The sequence is that of Sulfite reductase [NADPH] hemoprotein beta-component from Vibrio cholerae serotype O1 (strain ATCC 39315 / El Tor Inaba N16961).